The chain runs to 304 residues: Rhomboid-like protein 19 (304 aa).

6 helical membrane-spanning segments follow: residues 23 to 43 (LVVG…LALI), 58 to 78 (GYFE…LFMG), 93 to 113 (FIFV…IALY), 120 to 140 (VYLY…LVGI), 158 to 175 (WLPS…FFTL), and 179 to 198 (AYLP…LRYL). Residues 247–304 (SEDHDYSTSGAPLPGSDSAEASRRRERGARALEERLGTERLVPARNKDELQSDGLDNV) are disordered. The segment covering 266–284 (EASRRRERGARALEERLGT) has biased composition (basic and acidic residues).

The protein belongs to the peptidase S54 family.

The protein localises to the membrane. In terms of biological role, probable rhomboid-type serine protease that catalyzes intramembrane proteolysis. The sequence is that of Rhomboid-like protein 19 from Arabidopsis thaliana (Mouse-ear cress).